Here is a 302-residue protein sequence, read N- to C-terminus: tRNA-cytidine(32) 2-sulfurtransferase (302 aa).

The short motif at 44–49 is the PP-loop motif element; the sequence is SGGKDS. [4Fe-4S] cluster-binding residues include Cys119, Cys122, and Cys210.

Belongs to the TtcA family. As to quaternary structure, homodimer. Mg(2+) is required as a cofactor. It depends on [4Fe-4S] cluster as a cofactor.

It localises to the cytoplasm. The enzyme catalyses cytidine(32) in tRNA + S-sulfanyl-L-cysteinyl-[cysteine desulfurase] + AH2 + ATP = 2-thiocytidine(32) in tRNA + L-cysteinyl-[cysteine desulfurase] + A + AMP + diphosphate + H(+). It participates in tRNA modification. In terms of biological role, catalyzes the ATP-dependent 2-thiolation of cytidine in position 32 of tRNA, to form 2-thiocytidine (s(2)C32). The sulfur atoms are provided by the cysteine/cysteine desulfurase (IscS) system. The protein is tRNA-cytidine(32) 2-sulfurtransferase of Tolumonas auensis (strain DSM 9187 / NBRC 110442 / TA 4).